Here is a 959-residue protein sequence, read N- to C-terminus: Alanine--tRNA ligase (959 aa).

Ser389 is subject to Phosphoserine. Zn(2+) is bound by residues His606, His610, Cys725, and His729.

It belongs to the class-II aminoacyl-tRNA synthetase family. In terms of assembly, monomer. Zn(2+) is required as a cofactor.

It localises to the mitochondrion. The protein resides in the cytoplasm. It catalyses the reaction tRNA(Ala) + L-alanine + ATP = L-alanyl-tRNA(Ala) + AMP + diphosphate. Catalyzes the attachment of alanine to tRNA(Ala) in a two-step reaction: alanine is first activated by ATP to form Ala-AMP and then transferred to the acceptor end of tRNA(Ala). Also edits incorrectly charged tRNA(Ala) via its editing domain. The sequence is that of Alanine--tRNA ligase (ala1) from Schizosaccharomyces pombe (strain 972 / ATCC 24843) (Fission yeast).